Consider the following 149-residue polypeptide: Large ribosomal subunit protein eL19 (149 aa).

A disordered region spans residues 46-99 (EDGTIEAKTAKGNSRGRARKRQQKRAYGHKKGHGSRKGRSGGRQNEKEDWQSRI). Basic residues predominate over residues 59–85 (SRGRARKRQQKRAYGHKKGHGSRKGRS). Residues 89–99 (QNEKEDWQSRI) show a composition bias toward basic and acidic residues.

This sequence belongs to the eukaryotic ribosomal protein eL19 family. Part of the 50S ribosomal subunit.

In terms of biological role, binds to the 23S rRNA. The chain is Large ribosomal subunit protein eL19 from Natronomonas pharaonis (strain ATCC 35678 / DSM 2160 / CIP 103997 / JCM 8858 / NBRC 14720 / NCIMB 2260 / Gabara) (Halobacterium pharaonis).